The sequence spans 463 residues: Glutamate--tRNA ligase 2 (463 aa).

The 'HIGH' region motif lies at 10–20 (PSPTGFLHIGS). Positions 239–243 (KLSKR) match the 'KMSKS' region motif. Lysine 242 serves as a coordination point for ATP.

The protein belongs to the class-I aminoacyl-tRNA synthetase family. Glutamate--tRNA ligase type 1 subfamily. As to quaternary structure, monomer.

Its subcellular location is the cytoplasm. It catalyses the reaction tRNA(Glu) + L-glutamate + ATP = L-glutamyl-tRNA(Glu) + AMP + diphosphate. Functionally, catalyzes the attachment of glutamate to tRNA(Glu) in a two-step reaction: glutamate is first activated by ATP to form Glu-AMP and then transferred to the acceptor end of tRNA(Glu). In Rickettsia akari (strain Hartford), this protein is Glutamate--tRNA ligase 2.